We begin with the raw amino-acid sequence, 420 residues long: Ribulose bisphosphate carboxylase large chain (420 aa).

Substrate-binding residues include N103 and T153. Residue K155 is the Proton acceptor of the active site. Position 157 (K157) interacts with substrate. Mg(2+)-binding residues include K181, D183, and E184. Position 181 is an N6-carboxylysine (K181). The Proton acceptor role is filled by H274. 3 residues coordinate substrate: R275, H307, and S359.

The protein belongs to the RuBisCO large chain family. Type I subfamily. In terms of assembly, heterohexadecamer of 8 large chains and 8 small chains; disulfide-linked. The disulfide link is formed within the large subunit homodimers. The cofactor is Mg(2+). Post-translationally, the disulfide bond which can form in the large chain dimeric partners within the hexadecamer appears to be associated with oxidative stress and protein turnover.

The protein resides in the plastid. It localises to the chloroplast. It catalyses the reaction 2 (2R)-3-phosphoglycerate + 2 H(+) = D-ribulose 1,5-bisphosphate + CO2 + H2O. The enzyme catalyses D-ribulose 1,5-bisphosphate + O2 = 2-phosphoglycolate + (2R)-3-phosphoglycerate + 2 H(+). In terms of biological role, ruBisCO catalyzes two reactions: the carboxylation of D-ribulose 1,5-bisphosphate, the primary event in carbon dioxide fixation, as well as the oxidative fragmentation of the pentose substrate in the photorespiration process. Both reactions occur simultaneously and in competition at the same active site. The polypeptide is Ribulose bisphosphate carboxylase large chain (Anemia mexicana (Mexican fern)).